A 445-amino-acid chain; its full sequence is Zinc finger protein 296 (445 aa).

Over residues 1 to 10 the composition is skewed to basic residues; sequence MSRRKAGRVP. Residues 1–20 form a disordered region; it reads MSRRKAGRVPRRVDPDTDTD. Residue lysine 31 forms a Glycyl lysine isopeptide (Lys-Gly) (interchain with G-Cter in SUMO2) linkage. Positions 62–88 are disordered; that stretch reads SRPLGAPSTCAPRMPLSSKSSDRQPWT. C2H2-type zinc fingers lie at residues 138–161, 212–234, and 240–262; these read LSCL…QWDH, PTCD…MRSH, and YSCD…KKTH. The segment at 256–359 is disordered; that stretch reads NRHKKTHRQL…TAPRKSHGPG (104 aa). Positions 269 to 278 are enriched in polar residues; sequence SPSTSASSRG. Over residues 320–332 the composition is skewed to gly residues; the sequence is PGSGAQGGPGFVG. The span at 338–351 shows a compositional bias: basic and acidic residues; it reads KVERTDPVKIEKTA. 3 C2H2-type zinc fingers span residues 360–382, 388–410, and 418–441; these read GKCE…RRSH, YTCD…RRTH, and VKCP…RQKH.

The protein belongs to the krueppel C2H2-type zinc-finger protein family. In terms of assembly, interacts with KLF4. As to expression, strongly expressed in testis and embryonic stem cells.

The protein localises to the nucleus. May be a transcriptional corepressor with KLF4. The polypeptide is Zinc finger protein 296 (Mus musculus (Mouse)).